Reading from the N-terminus, the 342-residue chain is Dihydroorotase (342 aa).

Residues His13 and His15 each contribute to the Zn(2+) site. Substrate-binding positions include 15–17 (HLR) and Asn41. Residues Lys98, His135, and His173 each contribute to the Zn(2+) site. Residue Lys98 is modified to N6-carboxylysine. His135 provides a ligand contact to substrate. Residue Leu218 participates in substrate binding. Residue Asp246 coordinates Zn(2+). The active site involves Asp246. Positions 250 and 262 each coordinate substrate.

The protein belongs to the metallo-dependent hydrolases superfamily. DHOase family. Class II DHOase subfamily. In terms of assembly, homodimer. Zn(2+) is required as a cofactor.

It carries out the reaction (S)-dihydroorotate + H2O = N-carbamoyl-L-aspartate + H(+). Its pathway is pyrimidine metabolism; UMP biosynthesis via de novo pathway; (S)-dihydroorotate from bicarbonate: step 3/3. Its function is as follows. Catalyzes the reversible cyclization of carbamoyl aspartate to dihydroorotate. This chain is Dihydroorotase, found in Aliivibrio salmonicida (strain LFI1238) (Vibrio salmonicida (strain LFI1238)).